Reading from the N-terminus, the 109-residue chain is Thioredoxin (109 aa).

Residues 2–107 (SISQVIDTSF…LLNTLQKHLK (106 aa)) form the Thioredoxin domain. Residues Cys-31 and Cys-34 each act as nucleophile in the active site. A disulfide bridge links Cys-31 with Cys-34.

This sequence belongs to the thioredoxin family.

The protein localises to the plastid. The protein resides in the chloroplast. Participates in various redox reactions through the reversible oxidation of its active center dithiol to a disulfide and catalyzes dithiol-disulfide exchange reactions. In Griffithsia pacifica (Red alga), this protein is Thioredoxin (trxA).